A 444-amino-acid chain; its full sequence is Glutamyl-tRNA reductase (444 aa).

Substrate contacts are provided by residues 49-52 (TCNR), S109, 114-116 (ETQ), and Q120. The active-site Nucleophile is C50. 189–194 (GAGKMG) contacts NADP(+).

The protein belongs to the glutamyl-tRNA reductase family. In terms of assembly, homodimer.

The enzyme catalyses (S)-4-amino-5-oxopentanoate + tRNA(Glu) + NADP(+) = L-glutamyl-tRNA(Glu) + NADPH + H(+). Its pathway is porphyrin-containing compound metabolism; protoporphyrin-IX biosynthesis; 5-aminolevulinate from L-glutamyl-tRNA(Glu): step 1/2. In terms of biological role, catalyzes the NADPH-dependent reduction of glutamyl-tRNA(Glu) to glutamate 1-semialdehyde (GSA). The sequence is that of Glutamyl-tRNA reductase from Bacillus anthracis (strain A0248).